We begin with the raw amino-acid sequence, 297 residues long: Ribosomal RNA small subunit methyltransferase H (297 aa).

S-adenosyl-L-methionine is bound by residues 37 to 39 (GGH), Asp56, Phe87, Asp102, and His109.

It belongs to the methyltransferase superfamily. RsmH family.

It is found in the cytoplasm. The enzyme catalyses cytidine(1402) in 16S rRNA + S-adenosyl-L-methionine = N(4)-methylcytidine(1402) in 16S rRNA + S-adenosyl-L-homocysteine + H(+). Specifically methylates the N4 position of cytidine in position 1402 (C1402) of 16S rRNA. The polypeptide is Ribosomal RNA small subunit methyltransferase H (Borrelia turicatae (strain 91E135)).